Here is a 193-residue protein sequence, read N- to C-terminus: Putative 3-methyladenine DNA glycosylase (193 aa).

It belongs to the DNA glycosylase MPG family.

The sequence is that of Putative 3-methyladenine DNA glycosylase from Agrobacterium fabrum (strain C58 / ATCC 33970) (Agrobacterium tumefaciens (strain C58)).